The following is a 328-amino-acid chain: tRNA dimethylallyltransferase (328 aa).

Residue 25–32 (GNTGSGKS) participates in ATP binding. Substrate is bound at residue 27-32 (TGSGKS). Residues 50–53 (DSRQ) form an interaction with substrate tRNA region.

It belongs to the IPP transferase family. In terms of assembly, monomer. Mg(2+) serves as cofactor.

The catalysed reaction is adenosine(37) in tRNA + dimethylallyl diphosphate = N(6)-dimethylallyladenosine(37) in tRNA + diphosphate. Functionally, catalyzes the transfer of a dimethylallyl group onto the adenine at position 37 in tRNAs that read codons beginning with uridine, leading to the formation of N6-(dimethylallyl)adenosine (i(6)A). This Dehalococcoides mccartyi (strain ATCC BAA-2100 / JCM 16839 / KCTC 5957 / BAV1) protein is tRNA dimethylallyltransferase.